A 260-amino-acid polypeptide reads, in one-letter code: Adenosylcobinamide-GDP ribazoletransferase (260 aa).

7 consecutive transmembrane segments (helical) span residues 31 to 51 (IIFFPFIGFLEGVFCIFLVNI), 55 to 75 (IFSSSVISIILLVFLFSVRGI), 111 to 131 (VIGVAGAVALVLDVLCRFAFV), 140 to 160 (FLIFLFMFCFSRWIVIPLMYY), 177 to 197 (ISSWQVIISTVLPIFLLVYFT), 202 to 222 (FIFLPLIALFLFFISYILKKF), and 234 to 254 (HLGATVEITEIVFLICFLLGE).

This sequence belongs to the CobS family. Mg(2+) serves as cofactor.

The protein resides in the cell inner membrane. The enzyme catalyses alpha-ribazole + adenosylcob(III)inamide-GDP = adenosylcob(III)alamin + GMP + H(+). It carries out the reaction alpha-ribazole 5'-phosphate + adenosylcob(III)inamide-GDP = adenosylcob(III)alamin 5'-phosphate + GMP + H(+). The protein operates within cofactor biosynthesis; adenosylcobalamin biosynthesis; adenosylcobalamin from cob(II)yrinate a,c-diamide: step 7/7. In terms of biological role, joins adenosylcobinamide-GDP and alpha-ribazole to generate adenosylcobalamin (Ado-cobalamin). Also synthesizes adenosylcobalamin 5'-phosphate from adenosylcobinamide-GDP and alpha-ribazole 5'-phosphate. The polypeptide is Adenosylcobinamide-GDP ribazoletransferase (Thermodesulfovibrio yellowstonii (strain ATCC 51303 / DSM 11347 / YP87)).